We begin with the raw amino-acid sequence, 272 residues long: Phosphatidylglycerol--prolipoprotein diacylglyceryl transferase (272 aa).

7 helical membrane passes run leucine 17–alanine 37, leucine 55–tyrosine 75, valine 90–phenylalanine 110, phenylalanine 125–glycine 145, proline 174–phenylalanine 194, methionine 202–phenylalanine 222, and glycine 230–isoleucine 250. A 1,2-diacyl-sn-glycero-3-phospho-(1'-sn-glycerol) is bound at residue arginine 138.

This sequence belongs to the Lgt family.

The protein resides in the cell inner membrane. It carries out the reaction L-cysteinyl-[prolipoprotein] + a 1,2-diacyl-sn-glycero-3-phospho-(1'-sn-glycerol) = an S-1,2-diacyl-sn-glyceryl-L-cysteinyl-[prolipoprotein] + sn-glycerol 1-phosphate + H(+). It participates in protein modification; lipoprotein biosynthesis (diacylglyceryl transfer). In terms of biological role, catalyzes the transfer of the diacylglyceryl group from phosphatidylglycerol to the sulfhydryl group of the N-terminal cysteine of a prolipoprotein, the first step in the formation of mature lipoproteins. The chain is Phosphatidylglycerol--prolipoprotein diacylglyceryl transferase from Acinetobacter baumannii (strain ACICU).